A 162-amino-acid chain; its full sequence is RNA pyrophosphohydrolase (162 aa).

Residues 11–155 (PYRPCVGIVL…KRAVYEEVVA (145 aa)) enclose the Nudix hydrolase domain. Residues 45 to 66 (GGIDEGEKPREAALRELWEETG) carry the Nudix box motif.

This sequence belongs to the Nudix hydrolase family. RppH subfamily. A divalent metal cation is required as a cofactor.

Its function is as follows. Accelerates the degradation of transcripts by removing pyrophosphate from the 5'-end of triphosphorylated RNA, leading to a more labile monophosphorylated state that can stimulate subsequent ribonuclease cleavage. This chain is RNA pyrophosphohydrolase, found in Cereibacter sphaeroides (strain ATCC 17023 / DSM 158 / JCM 6121 / CCUG 31486 / LMG 2827 / NBRC 12203 / NCIMB 8253 / ATH 2.4.1.) (Rhodobacter sphaeroides).